The primary structure comprises 117 residues: Large ribosomal subunit protein uL22 (117 aa).

Belongs to the universal ribosomal protein uL22 family. Part of the 50S ribosomal subunit.

Functionally, this protein binds specifically to 23S rRNA; its binding is stimulated by other ribosomal proteins, e.g. L4, L17, and L20. It is important during the early stages of 50S assembly. It makes multiple contacts with different domains of the 23S rRNA in the assembled 50S subunit and ribosome. Its function is as follows. The globular domain of the protein is located near the polypeptide exit tunnel on the outside of the subunit, while an extended beta-hairpin is found that lines the wall of the exit tunnel in the center of the 70S ribosome. The chain is Large ribosomal subunit protein uL22 from Staphylococcus aureus (strain USA300).